We begin with the raw amino-acid sequence, 510 residues long: DAP3-binding cell death enhancer 1 (510 aa).

Residues 1–23 (MWRLTGILGRALPRLLGPGFRGI) constitute a mitochondrion transit peptide. Disordered stretches follow at residues 19–61 (GFRG…SRDP) and 142–185 (VLPR…SGLL). Residues 24 to 101 (TPKPTSSDGS…AVLALHLARQ (78 aa)) constitute a propeptide, extended MTS. Low complexity predominate over residues 35 to 45 (TTSPTLPLTRL). Composition is skewed to basic and acidic residues over residues 46 to 61 (SFDR…SRDP) and 155 to 167 (GLRE…EDHP). Positions 169-181 (APSQCLPSDSSLR) are enriched in polar residues. TPR repeat units lie at residues 213–245 (AHPP…QLSV), 246–278 (AITF…RGYS), 279–313 (KAQY…VQGH), 314–351 (SLAQ…DSGL), 352–385 (TEAQ…SNGD), 386–423 (SQSR…GNEP), and 471–499 (ASST…TIPS). An SIFI-degron motif is present at residues 307-326 (LAAVQGHSLAQYRYARCLLQ).

The protein belongs to the DELE1 family. Interacts with DAP3. As to quaternary structure, interacts (via TPR repeats) with EIF2AK1/HRI; activating the protein kinase activity of EIF2AK1/HRI, thereby promoting the integrated stress response (ISR). In terms of assembly, homooctamer; oligomerization is required to activate EIF2AK1/HRI. Interacts (via TPR repeats) with EIF2AK1/HRI; activating the protein kinase activity of EIF2AK1/HRI, thereby promoting the integrated stress response (ISR). Unstable protein in absence of stress: imported in the mitochondrial matrix following processing by the mitochondrial-processing peptidase (MPP), where it is degraded by LONP1. Stabilized in response to iron deficiency: iron deficiency impairs mitochondrial import, promoting localization at the mitochondrial surface and stabilization. Cleaved by OMA1 in response to mitochondrial stress, generating the DAP3-binding cell death enhancer 1 short form (DELE1(S) or S-DELE1) that accumulates in the cytosol and activates the protein kinase activity of EIF2AK1/HRI. Protein cleavage by OMA1 can take place at different positions, and apparently does not require a specific sequence motif. Post-translationally, ubiquitinated and degraded by the SIFI complex once the mitochondrial stress has been resolved, thereby providing stress response silencing. Within the SIFI complex, UBR4 initiates ubiquitin chain that are further elongated or branched by KCMF1.

The protein localises to the mitochondrion. The protein resides in the mitochondrion outer membrane. It localises to the mitochondrion inner membrane. Its subcellular location is the cytoplasm. It is found in the cytosol. Functionally, protein kinase activator that acts as a key activator of the integrated stress response (ISR) following various stresses, such as iron deficiency, mitochondrial stress or mitochondrial DNA breaks. Detects impaired protein import and processing in mitochondria, activating the ISR. May also required for the induction of death receptor-mediated apoptosis through the regulation of caspase activation. In terms of biological role, protein kinase activator that activates the ISR in response to iron deficiency: iron deficiency impairs mitochondrial import, promoting DELE1 localization at the mitochondrial surface, where it binds and activates EIF2AK1/HRI to trigger the ISR. Its function is as follows. Protein kinase activator generated by protein cleavage in response to mitochondrial stress, which accumulates in the cytosol and specifically binds to and activates the protein kinase activity of EIF2AK1/HRI. It thereby activates the integrated stress response (ISR): EIF2AK1/HRI activation promotes eIF-2-alpha (EIF2S1) phosphorylation, leading to a decrease in global protein synthesis and the induction of selected genes, including the transcription factor ATF4, the master transcriptional regulator of the ISR. Also acts as an activator of PRKN-independent mitophagy: activates the protein kinase activity of EIF2AK1/HRI in response to mitochondrial damage, promoting eIF-2-alpha (EIF2S1) phosphorylation, leading to mitochondrial localization of EIF2S1 followed by induction of mitophagy. The polypeptide is DAP3-binding cell death enhancer 1 (Mus musculus (Mouse)).